The following is a 240-amino-acid chain: C-type lectin domain family 4 member A (240 aa).

Over 1–48 (MASEITYAEVRIKNESNSSVTYSGSPAAPREKPTRHLSKPGSLLVPFT) the chain is Cytoplasmic. The ITIM motif signature appears at 5 to 10 (ITYAEV). Residues 18-38 (SSVTYSGSPAAPREKPTRHLS) form a disordered region. A helical; Signal-anchor for type II membrane protein membrane pass occupies residues 49–69 (SLMVLLLLLAITFLVAFIIYF). Residues 70-240 (QKYSQFLEEK…SVCQMKKIQL (171 aa)) lie on the Extracellular side of the membrane. Intrachain disulfides connect C107–C118, C140–C233, and C208–C225. Residues 129 to 235 (SKASWSESEK…SGKQQSVCQM (107 aa)) enclose the C-type lectin domain. Positions 149 and 155 each coordinate Ca(2+). A glycan (N-linked (GlcNAc...) asparagine) is linked at N190. Ca(2+) is bound by residues E200, S202, and E206. Alpha-D-mannopyranose contacts are provided by residues 200-202 (EPS) and E206. 211-213 (INH) provides a ligand contact to N-acetyl-D-glucosamine. Ca(2+) contacts are provided by N221 and D222.

As to quaternary structure, may interact with PTPN6 via its ITIM site. In terms of tissue distribution, expressed by myeloid cells (dendritic cells, macrophages, and neutrophils) and B-cells.

Its subcellular location is the cell membrane. Functionally, C-type lectin receptor that binds carbohydrates mannose and fucose but also weakly interacts with N-acetylglucosamine (GlcNAc) in a Ca(2+)-dependent manner. Involved in regulating immune reactivity. Once triggered by antigen, it is internalized by clathrin-dependent endocytosis and delivers its antigenic cargo into the antigen presentation pathway resulting in cross-priming of CD8(+) T cells. This cross-presentation and cross-priming are enhanced by TLR7 and TLR8 agonists with increased expansion of the CD8(+) T cells, high production of IFNG and TNF with reduced levels of IL4, IL5 and IL13. In plasmacytoid dendritic cells, inhibits TLR9-mediated IFNA and TNF production. May be involved via its ITIM motif (immunoreceptor tyrosine-based inhibitory motifs) in the inhibition of B-cell-receptor-mediated calcium mobilization and protein tyrosine phosphorylation. The sequence is that of C-type lectin domain family 4 member A (Clec4a) from Rattus norvegicus (Rat).